The chain runs to 288 residues: N(1)-aminopropylagmatine ureohydrolase (288 aa).

Mn(2+) is bound by residues histidine 114, aspartate 133, histidine 135, aspartate 137, aspartate 213, and aspartate 215.

It belongs to the arginase family. It depends on Mn(2+) as a cofactor.

Its subcellular location is the cytoplasm. It catalyses the reaction N(1)-(3-aminopropyl)agmatine + H2O = urea + spermidine. The enzyme catalyses agmatine + H2O = urea + putrescine. The protein operates within amine and polyamine biosynthesis; spermidine biosynthesis. Its function is as follows. Involved in the biosynthesis of polyamines which are thought to support the growth of thermophilic microorganisms under high-temperature conditions. It seems that long-chain and branched-chain of polyamines effectively stabilize DNA and RNA, respectively. Catalyzes the decarboxylation of N1-(3-aminopropyl)agmatine to yield spermidine and urea. It can also use agmatine to yield putrescine. The chain is N(1)-aminopropylagmatine ureohydrolase from Thermococcus kodakarensis (strain ATCC BAA-918 / JCM 12380 / KOD1) (Pyrococcus kodakaraensis (strain KOD1)).